A 397-amino-acid chain; its full sequence is CCA-adding enzyme (397 aa).

2 residues coordinate ATP: Gly26 and Arg29. Residues Gly26 and Arg29 each coordinate CTP. Residues Asp39 and Asp41 each contribute to the Mg(2+) site. Residues Arg110, Asp153, Arg156, Arg159, and Arg162 each contribute to the ATP site. CTP contacts are provided by Arg110, Asp153, Arg156, Arg159, and Arg162.

This sequence belongs to the tRNA nucleotidyltransferase/poly(A) polymerase family. Bacterial CCA-adding enzyme type 3 subfamily. In terms of assembly, homodimer. Mg(2+) is required as a cofactor.

The enzyme catalyses a tRNA precursor + 2 CTP + ATP = a tRNA with a 3' CCA end + 3 diphosphate. It carries out the reaction a tRNA with a 3' CCA end + 2 CTP + ATP = a tRNA with a 3' CCACCA end + 3 diphosphate. Catalyzes the addition and repair of the essential 3'-terminal CCA sequence in tRNAs without using a nucleic acid template. Adds these three nucleotides in the order of C, C, and A to the tRNA nucleotide-73, using CTP and ATP as substrates and producing inorganic pyrophosphate. tRNA 3'-terminal CCA addition is required both for tRNA processing and repair. Also involved in tRNA surveillance by mediating tandem CCA addition to generate a CCACCA at the 3' terminus of unstable tRNAs. While stable tRNAs receive only 3'-terminal CCA, unstable tRNAs are marked with CCACCA and rapidly degraded. This Bacillus cereus (strain 03BB102) protein is CCA-adding enzyme.